The primary structure comprises 124 residues: Ribonuclease pancreatic (124 aa).

Residues 1–13 (KETSAQKFERQHM) show a composition bias toward basic and acidic residues. The segment at 1-25 (KETSAQKFERQHMDSTGSSSSSPTY) is disordered. Residues lysine 7 and arginine 10 each contribute to the substrate site. Residue histidine 12 is the Proton acceptor of the active site. 4 disulfide bridges follow: cysteine 26/cysteine 84, cysteine 40/cysteine 95, cysteine 58/cysteine 110, and cysteine 65/cysteine 72. Substrate-binding positions include 41-45 (KPVNT), lysine 66, and arginine 85. Histidine 119 acts as the Proton donor in catalysis.

Belongs to the pancreatic ribonuclease family. Monomer. Interacts with and forms tight 1:1 complexes with RNH1. Dimerization of two such complexes may occur. Interaction with RNH1 inhibits this protein. In terms of tissue distribution, pancreas.

It is found in the secreted. It carries out the reaction an [RNA] containing cytidine + H2O = an [RNA]-3'-cytidine-3'-phosphate + a 5'-hydroxy-ribonucleotide-3'-[RNA].. The enzyme catalyses an [RNA] containing uridine + H2O = an [RNA]-3'-uridine-3'-phosphate + a 5'-hydroxy-ribonucleotide-3'-[RNA].. Functionally, endonuclease that catalyzes the cleavage of RNA on the 3' side of pyrimidine nucleotides. Acts on single-stranded and double-stranded RNA. The chain is Ribonuclease pancreatic (RNASE1) from Ondatra zibethicus (Muskrat).